Reading from the N-terminus, the 61-residue chain is Small ribosomal subunit protein uS14 (61 aa).

Positions 24, 27, 40, and 43 each coordinate Zn(2+).

The protein belongs to the universal ribosomal protein uS14 family. Zinc-binding uS14 subfamily. As to quaternary structure, part of the 30S ribosomal subunit. Contacts proteins S3 and S10. The cofactor is Zn(2+).

Binds 16S rRNA, required for the assembly of 30S particles and may also be responsible for determining the conformation of the 16S rRNA at the A site. This chain is Small ribosomal subunit protein uS14, found in Syntrophotalea carbinolica (strain DSM 2380 / NBRC 103641 / GraBd1) (Pelobacter carbinolicus).